Reading from the N-terminus, the 572-residue chain is Probable cysteine--tRNA ligase, mitochondrial (572 aa).

Position 81 (Cys-81) interacts with Zn(2+). Residue Gly-82 coordinates L-cysteine. Positions 83–93 (PTVYDHAHLGH) match the 'HIGH' region motif. Thr-122 is an L-cysteine binding site. The 'KIIK' region motif lies at 127 to 130 (KIIK). Zn(2+) contacts are provided by Cys-260, His-285, and Glu-289. His-285 serves as a coordination point for L-cysteine. The 'KMSKS' region signature appears at 320–324 (KMSKS). Lys-323 is a binding site for ATP.

This sequence belongs to the class-I aminoacyl-tRNA synthetase family. Requires Zn(2+) as cofactor.

The protein resides in the mitochondrion. It catalyses the reaction tRNA(Cys) + L-cysteine + ATP = L-cysteinyl-tRNA(Cys) + AMP + diphosphate. It carries out the reaction 2 L-cysteine = S-sulfanyl-L-cysteine + L-alanine. The enzyme catalyses S-sulfanyl-L-cysteine + L-cysteine = S-disulfanyl-L-cysteine + L-alanine. The catalysed reaction is S-sulfanyl-L-cysteine + tRNA(Cys) + ATP = (S)-sulfanyl-L-cysteinyl-tRNA(Cys) + AMP + diphosphate. It catalyses the reaction S-disulfanyl-L-cysteine + tRNA(Cys) + ATP = (S)-disulfanyl-L-cysteinyl-tRNA(Cys) + AMP + diphosphate. Functionally, mitochondrial cysteine-specific aminoacyl-tRNA synthetase that catalyzes the ATP-dependent ligation of cysteine to tRNA(Cys). Its function is as follows. In addition to its role as an aminoacyl-tRNA synthetase, has also cysteine persulfide synthase activity. Produces reactive persulfide species such as cysteine persulfide (CysSSH) from substrate cysteine and mediate direct incorporation of CysSSH into proteins during translations, resulting in protein persulfides and polysulfides. CysSSHs behave as potent antioxidants and cellular protectants. The sequence is that of Probable cysteine--tRNA ligase, mitochondrial (cars2) from Xenopus tropicalis (Western clawed frog).